Reading from the N-terminus, the 467-residue chain is MTVRTRFAPSPTGFLHIGGARTALFSWAYARKHAGSFILRIEDTDVARSTPEAVQAILDGMRWLGLDWDEGPFYQMQRMDRYKVVIGKLLDEGHAYHCYCSREELDALREQQMREGKKPRYDGRWRPESGKVLPAIPADIPPVVRFKNPRAGNVVWNDLVKGEISIANEELDDLIIARADGTPTYNFCVVVDDWDMGITHVIRGDDHVNNTPRQINLLQALGATIPQYAHLSMILGDDGQKLSKRHGAVSVMQYHEDGYLPEAVLNYLARLGWSHGDDEIFTMSQFCEWFGFDHITPSAAQFNTEKLNWLNAHYIKQAELGRLAVDIAKRLADAGIQVSDRVDLQGVIALYRDRASTLNQIAGSIAYFYRRPNIEASLLEKYLTPEILPVLTALLEELKDIEWTREKLHEVIQGAVTQNALKFPKVAMPLRVMLTGSDQSPSIDAVMVLLGQEESLARMRSVLQVNV.

Positions 9-19 (PSPTGFLHIGG) match the 'HIGH' region motif. The 'KMSKS' region signature appears at 241–245 (KLSKR). Residue lysine 244 coordinates ATP.

This sequence belongs to the class-I aminoacyl-tRNA synthetase family. Glutamate--tRNA ligase type 1 subfamily. Monomer.

The protein resides in the cytoplasm. The enzyme catalyses tRNA(Glu) + L-glutamate + ATP = L-glutamyl-tRNA(Glu) + AMP + diphosphate. In terms of biological role, catalyzes the attachment of glutamate to tRNA(Glu) in a two-step reaction: glutamate is first activated by ATP to form Glu-AMP and then transferred to the acceptor end of tRNA(Glu). The sequence is that of Glutamate--tRNA ligase from Methylobacillus flagellatus (strain ATCC 51484 / DSM 6875 / VKM B-1610 / KT).